Consider the following 336-residue polypeptide: Corrinoid adenosyltransferase PduO (336 aa).

The segment at 1–185 (MAIYTRTGDA…IIREVSKRYL (185 aa)) is pduON. Positions 194–336 (KETTPVALSF…IAAINVGTHQ (143 aa)) are pduOC. His207 contacts heme. Residues Glu215 and Gln218 each coordinate Mg(2+).

Belongs to the Cob(I)alamin adenosyltransferase family. PduO subfamily. The C-terminal domain (PduOC) forms stable octamers and also crystallizes as an octamer. Forms a complex with PduS. Heme b serves as cofactor. It depends on Mg(2+) as a cofactor.

Its subcellular location is the bacterial microcompartment. It catalyses the reaction cob(I)alamin-[corrinoid adenosyltransferase] + ATP = apo-[corrinoid adenosyltransferase] + adenosylcob(III)alamin + triphosphate. Its pathway is polyol metabolism; 1,2-propanediol degradation. It functions in the pathway cofactor biosynthesis; adenosylcobalamin biosynthesis. With respect to regulation, inhibited by ADP but not significantly by other nucleotides, inhibited by diphosphate and less well by triphosphate. Its function is as follows. Converts cob(I)alamin to adenosylcobalamin (adenosylcob(III)alamin), the cofactor for propanediol dehydratase. Found in the bacterial microcompartment (BMC) dedicated to 1,2-propanediol (1,2-PD) degradation. For adenosylcobalamin synthesis dATP can replace ATP, but no other nucleotides will substitute. PduS and PduO allow regeneration of the adenosylcobalamin cofactor within the BMC. In terms of biological role, the 1,2-PD-specific bacterial microcompartment (BMC) concentrates low levels of 1,2-PD catabolic enzymes, concentrates volatile reaction intermediates thus enhancing pathway flux and keeps the level of toxic, mutagenic propionaldehyde low. This is Corrinoid adenosyltransferase PduO from Salmonella typhimurium (strain LT2 / SGSC1412 / ATCC 700720).